Here is a 244-residue protein sequence, read N- to C-terminus: tRNA (guanine-N(7)-)-methyltransferase (244 aa).

4 residues coordinate S-adenosyl-L-methionine: Glu-75, Glu-100, Asp-127, and Asp-150. Asp-150 is a catalytic residue. Substrate contacts are provided by residues Lys-154, Asp-186, and 223–226 (TRFE).

Belongs to the class I-like SAM-binding methyltransferase superfamily. TrmB family.

It catalyses the reaction guanosine(46) in tRNA + S-adenosyl-L-methionine = N(7)-methylguanosine(46) in tRNA + S-adenosyl-L-homocysteine. It participates in tRNA modification; N(7)-methylguanine-tRNA biosynthesis. Its function is as follows. Catalyzes the formation of N(7)-methylguanine at position 46 (m7G46) in tRNA. The protein is tRNA (guanine-N(7)-)-methyltransferase of Xylella fastidiosa (strain 9a5c).